The primary structure comprises 382 residues: Mannitol-1-phosphate 5-dehydrogenase (382 aa).

3–14 (ALHFGAGNIGRG) is a binding site for NAD(+). At Lys-269 the chain carries N6-acetyllysine.

Belongs to the mannitol dehydrogenase family.

The enzyme catalyses D-mannitol 1-phosphate + NAD(+) = beta-D-fructose 6-phosphate + NADH + H(+). This is Mannitol-1-phosphate 5-dehydrogenase from Escherichia coli O127:H6 (strain E2348/69 / EPEC).